A 384-amino-acid chain; its full sequence is Methylthioribose-1-phosphate isomerase (384 aa).

Catalysis depends on aspartate 255, which acts as the Proton donor.

Belongs to the eIF-2B alpha/beta/delta subunits family. MtnA subfamily.

It is found in the cytoplasm. Its subcellular location is the nucleus. The catalysed reaction is 5-(methylsulfanyl)-alpha-D-ribose 1-phosphate = 5-(methylsulfanyl)-D-ribulose 1-phosphate. Its pathway is amino-acid biosynthesis; L-methionine biosynthesis via salvage pathway; L-methionine from S-methyl-5-thio-alpha-D-ribose 1-phosphate: step 1/6. Its function is as follows. Catalyzes the interconversion of methylthioribose-1-phosphate (MTR-1-P) into methylthioribulose-1-phosphate (MTRu-1-P). In Talaromyces marneffei (strain ATCC 18224 / CBS 334.59 / QM 7333) (Penicillium marneffei), this protein is Methylthioribose-1-phosphate isomerase (mri1).